A 486-amino-acid chain; its full sequence is Differentially expressed in FDCP 8 homolog (486 aa).

The tract at residues 1–26 (MSSWCSSEDAHNQSSTPSTRSRKSSW) is disordered. 2 consecutive Phorbol-ester/DAG-type zinc fingers follow at residues 160–212 (GHEF…KRVC) and 393–459 (IHTV…SLNC).

It belongs to the DEF8 family.

This chain is Differentially expressed in FDCP 8 homolog, found in Caenorhabditis elegans.